The sequence spans 168 residues: Thiosulfate dehydrogenase [quinone] small subunit (168 aa).

A helical transmembrane segment spans residues 6-26; it reads IIGIIFAILVVGWILATGQWA.

In terms of assembly, heterodimer of a large and a small subunit in a 2:2 stoichiometry. TQO may associate with the terminal oxidase formed by doxBCE. The N-terminus is blocked. In terms of processing, glycosylated.

The protein localises to the cell membrane. It catalyses the reaction 6-decylubiquinone + 2 thiosulfate = 6-decylubiquinol + tetrathionate. With respect to regulation, inhibited by sulfite, metabisulfite and dithonite. TQO plays a role in sulfur oxidation and is proposed to couple sulfur oxidation to dioxygen reduction; caldariellaquinone or sulfolobus quinone seem to serve to transfer electrons to the electron transport chain terminal oxidase formed by DoxBCE. The chain is Thiosulfate dehydrogenase [quinone] small subunit (doxA) from Acidianus ambivalens (Desulfurolobus ambivalens).